Reading from the N-terminus, the 590-residue chain is Plasmepsin V (590 aa).

Over 1–544 (MNNYFLRKEN…EKENIFLKVS (544 aa)) the chain is Lumenal. A coiled-coil region spans residues 33–81 (CNNVENKIDNVGKKIENVGKKIGDMENKNDNVENKNDNVGNKNDNVKNA). The Peptidase A1 domain occupies 100–514 (YFLDIDIGKP…DLQQNQIAFI (415 aa)). D118 is a catalytic residue. 7 disulfide bridges follow: C128/C211, C131/C134, C155/C166, C160/C171, C259/C518, C389/C434, and C443/C479. Residues 282 to 291 (KEKQKMDKSD) are compositionally biased toward basic and acidic residues. The interval 282–316 (KEKQKMDKSDNNSSNKGNVSIKLKNNDKNDDEENN) is disordered. The segment covering 292–304 (NNSSNKGNVSIKL) has biased composition (low complexity). Residue D365 is part of the active site. A helical membrane pass occupies residues 545–565 (YINLYCLWLLLALTILLSLIL). Topologically, residues 566–590 (YVRKMFYMDYFPLSDQNKSPIQEST) are cytoplasmic.

It belongs to the peptidase A1 family. In terms of assembly, component of a complex composed of SPC25 and PMV; the interaction is mediated via the transmembrane domains. The complex interacts with the SEC61 channel-forming translocon complex and is involved in the recognition and import of PEXEL motif-containing proteins into the ER for subsequent export. It is not clear if the zymogen has a cleavable propeptide. In vitro, appears to be cleaved between Asn-80 and Ala-81. Cleavage of the putative propeptide is dispensable for catalytic activity.

Its subcellular location is the endoplasmic reticulum membrane. Inhibited by peptidomimetic inhibitor WEHI-842. Inhibited by Cu(2+) and Hg(2+). Its function is as follows. During the asexual blood stage, plays an essential role in the export of several proteins into the host erythrocytes by cleaving the pentameric localization motif RxLxE/Q/D (termed Plasmodium export element (PEXEL)) located downstream of the N-terminal secretory signal sequence. Specifically, cleaves after the leucine residue in the RxLxE/Q/D (or RxLxxE) motif of exported proteins including RESA, EMP2, EMP3, KAHRP, RIF/Rifin and STEVOR. Also, by regulating protein export, plays an essential role in gametocyte development and thus, parasite transmission to the mosquito vector. In Plasmodium falciparum (isolate 3D7), this protein is Plasmepsin V.